The sequence spans 185 residues: Elongation factor P (185 aa).

It belongs to the elongation factor P family.

It is found in the cytoplasm. The protein operates within protein biosynthesis; polypeptide chain elongation. Functionally, involved in peptide bond synthesis. Stimulates efficient translation and peptide-bond synthesis on native or reconstituted 70S ribosomes in vitro. Probably functions indirectly by altering the affinity of the ribosome for aminoacyl-tRNA, thus increasing their reactivity as acceptors for peptidyl transferase. This chain is Elongation factor P, found in Endomicrobium trichonymphae.